Consider the following 97-residue polypeptide: Aspartyl/glutamyl-tRNA(Asn/Gln) amidotransferase subunit C (97 aa).

The tract at residues 58 to 78 (LPQGRLRKDTPRDPLDRENAL) is disordered. Residues 63–77 (LRKDTPRDPLDRENA) are compositionally biased toward basic and acidic residues.

The protein belongs to the GatC family. In terms of assembly, heterotrimer of A, B and C subunits.

It carries out the reaction L-glutamyl-tRNA(Gln) + L-glutamine + ATP + H2O = L-glutaminyl-tRNA(Gln) + L-glutamate + ADP + phosphate + H(+). The catalysed reaction is L-aspartyl-tRNA(Asn) + L-glutamine + ATP + H2O = L-asparaginyl-tRNA(Asn) + L-glutamate + ADP + phosphate + 2 H(+). In terms of biological role, allows the formation of correctly charged Asn-tRNA(Asn) or Gln-tRNA(Gln) through the transamidation of misacylated Asp-tRNA(Asn) or Glu-tRNA(Gln) in organisms which lack either or both of asparaginyl-tRNA or glutaminyl-tRNA synthetases. The reaction takes place in the presence of glutamine and ATP through an activated phospho-Asp-tRNA(Asn) or phospho-Glu-tRNA(Gln). The sequence is that of Aspartyl/glutamyl-tRNA(Asn/Gln) amidotransferase subunit C from Saccharolobus islandicus (strain Y.N.15.51 / Yellowstone #2) (Sulfolobus islandicus).